Here is a 184-residue protein sequence, read N- to C-terminus: ATP synthase subunit b, chloroplastic (184 aa).

A helical membrane pass occupies residues 27-49; sequence LATNPINLSVVFGVLIFFGKGVL.

It belongs to the ATPase B chain family. F-type ATPases have 2 components, F(1) - the catalytic core - and F(0) - the membrane proton channel. F(1) has five subunits: alpha(3), beta(3), gamma(1), delta(1), epsilon(1). F(0) has four main subunits: a(1), b(1), b'(1) and c(10-14). The alpha and beta chains form an alternating ring which encloses part of the gamma chain. F(1) is attached to F(0) by a central stalk formed by the gamma and epsilon chains, while a peripheral stalk is formed by the delta, b and b' chains.

The protein resides in the plastid. It is found in the chloroplast thylakoid membrane. Functionally, f(1)F(0) ATP synthase produces ATP from ADP in the presence of a proton or sodium gradient. F-type ATPases consist of two structural domains, F(1) containing the extramembraneous catalytic core and F(0) containing the membrane proton channel, linked together by a central stalk and a peripheral stalk. During catalysis, ATP synthesis in the catalytic domain of F(1) is coupled via a rotary mechanism of the central stalk subunits to proton translocation. In terms of biological role, component of the F(0) channel, it forms part of the peripheral stalk, linking F(1) to F(0). The polypeptide is ATP synthase subunit b, chloroplastic (Crucihimalaya wallichii (Rock-cress)).